A 24-amino-acid chain; its full sequence is Brevinin-1SPc (24 aa).

Cysteine 18 and cysteine 24 are joined by a disulfide.

Expressed by the skin glands.

It is found in the secreted. Its function is as follows. Antimicrobial peptide with activity against Gram-negative and Gram-positive bacteria and fungi. Also shows hemolytic activity. The sequence is that of Brevinin-1SPc from Lithobates septentrionalis (Mink frog).